A 529-amino-acid chain; its full sequence is Listeriolysin O (529 aa).

The first 24 residues, 1 to 24, serve as a signal peptide directing secretion; the sequence is MKKIMLVFITLILVSLPIAQQTEA. A disordered region spans residues 35-54; sequence SISSMAPPASPPASPKTPIE. 4 consecutive transmembrane segments (beta stranded) span residues 214-227, 234-243, 312-321, and 329-341; these read ESQL…AFKA, VNFGAISEGK, STKVKAAFDA, and SGDV…IKNS. The Conserved undecapeptide motif lies at 483–493; the sequence is ECTGLAWEWWR. Residues 515-516 carry the Cholesterol binding motif; the sequence is TL.

This sequence belongs to the cholesterol-dependent cytolysin family. As to quaternary structure, homooligomeric pore complex of 35 to 50 subunits; when inserted in the host membrane.

Its subcellular location is the secreted. The protein localises to the host membrane. It localises to the host cell membrane. Its activity is regulated as follows. Activity of listeriolysin O is regulated on multiple levels. It should be high in the phagosome, thereby allowing escape of the bacteria from the phagosomal compartment. Then, once inside the host cytosol, the activity must be controlled to prevent lysis of the host plasma membrane and loss of the intracellular environment. A cholesterol-dependent toxin that causes cytolysis by forming pores in cholesterol containing host membranes. After binding to target membranes, the protein undergoes a major conformation change, leading to its insertion in the host membrane and formation of an oligomeric pore complex. Cholesterol is required for binding to host membranes, membrane insertion and pore formation; cholesterol binding is mediated by a Thr-Leu pair in the C-terminus. Acts as a major virulence factor required for the escape of bacteria from phagosomal vacuoles and entry into the host cytosol. Can be reversibly inactivated by oxidation. In Listeria monocytogenes serotype 1/2a (strain 08-5578), this protein is Listeriolysin O (hly).